The primary structure comprises 350 residues: Biotin synthase (350 aa).

A Radical SAM core domain is found at 54 to 278 (REIQLSTLLS…TMPQSYVRLS (225 aa)). Residues Cys69, Cys73, and Cys76 each contribute to the [4Fe-4S] cluster site. Cys113, Cys144, Cys204, and Arg276 together coordinate [2Fe-2S] cluster.

Belongs to the radical SAM superfamily. Biotin synthase family. In terms of assembly, homodimer. The cofactor is [4Fe-4S] cluster. [2Fe-2S] cluster serves as cofactor.

It catalyses the reaction (4R,5S)-dethiobiotin + (sulfur carrier)-SH + 2 reduced [2Fe-2S]-[ferredoxin] + 2 S-adenosyl-L-methionine = (sulfur carrier)-H + biotin + 2 5'-deoxyadenosine + 2 L-methionine + 2 oxidized [2Fe-2S]-[ferredoxin]. Its pathway is cofactor biosynthesis; biotin biosynthesis; biotin from 7,8-diaminononanoate: step 2/2. In terms of biological role, catalyzes the conversion of dethiobiotin (DTB) to biotin by the insertion of a sulfur atom into dethiobiotin via a radical-based mechanism. In Neisseria meningitidis serogroup C (strain 053442), this protein is Biotin synthase.